Consider the following 270-residue polypeptide: FKBP-type peptidyl-prolyl cis-trans isomerase FkpA (270 aa).

The first 25 residues, 1–25, serve as a signal peptide directing secretion; that stretch reads MKSLFKVTLLATTMAVALHAPITFA. The PPIase FKBP-type domain maps to 164-249; that stretch reads SDTVVVNYKG…VFDVELLDVK (86 aa).

It belongs to the FKBP-type PPIase family.

The protein resides in the periplasm. The enzyme catalyses [protein]-peptidylproline (omega=180) = [protein]-peptidylproline (omega=0). Functionally, PPIases accelerate the folding of proteins. It catalyzes the cis-trans isomerization of proline imidic peptide bonds in oligopeptides. This chain is FKBP-type peptidyl-prolyl cis-trans isomerase FkpA (fkpA), found in Escherichia coli O157:H7.